The following is a 683-amino-acid chain: Acetyl-coenzyme A synthetase 2 (683 aa).

CoA-binding positions include 207 to 210 and threonine 326; that span reads RGGK. Residues 402–404, 426–431, aspartate 517, and arginine 532 contribute to the ATP site; these read GEP and DTFWQT. Serine 540 contributes to the CoA binding site. An ATP-binding site is contributed by arginine 543. Arginine 613 lines the CoA pocket.

This sequence belongs to the ATP-dependent AMP-binding enzyme family.

It catalyses the reaction acetate + ATP + CoA = acetyl-CoA + AMP + diphosphate. In Candida glabrata (strain ATCC 2001 / BCRC 20586 / JCM 3761 / NBRC 0622 / NRRL Y-65 / CBS 138) (Yeast), this protein is Acetyl-coenzyme A synthetase 2 (ACS2).